Consider the following 311-residue polypeptide: Bifunctional protein FolD (311 aa).

NADP(+)-binding positions include 184–186 (GAS), Ile-209, and Ile-250.

The protein belongs to the tetrahydrofolate dehydrogenase/cyclohydrolase family. Homodimer.

It carries out the reaction (6R)-5,10-methylene-5,6,7,8-tetrahydrofolate + NADP(+) = (6R)-5,10-methenyltetrahydrofolate + NADPH. The catalysed reaction is (6R)-5,10-methenyltetrahydrofolate + H2O = (6R)-10-formyltetrahydrofolate + H(+). It participates in one-carbon metabolism; tetrahydrofolate interconversion. In terms of biological role, catalyzes the oxidation of 5,10-methylenetetrahydrofolate to 5,10-methenyltetrahydrofolate and then the hydrolysis of 5,10-methenyltetrahydrofolate to 10-formyltetrahydrofolate. The protein is Bifunctional protein FolD of Gluconacetobacter diazotrophicus (strain ATCC 49037 / DSM 5601 / CCUG 37298 / CIP 103539 / LMG 7603 / PAl5).